A 230-amino-acid polypeptide reads, in one-letter code: Phosphoglycolate phosphatase (230 aa).

Asp-9 serves as the catalytic Nucleophile. Mg(2+) contacts are provided by Asp-9, Asp-11, and Asp-175.

It belongs to the HAD-like hydrolase superfamily. CbbY/CbbZ/Gph/YieH family. It depends on Mg(2+) as a cofactor.

The enzyme catalyses 2-phosphoglycolate + H2O = glycolate + phosphate. It functions in the pathway organic acid metabolism; glycolate biosynthesis; glycolate from 2-phosphoglycolate: step 1/1. Functionally, specifically catalyzes the dephosphorylation of 2-phosphoglycolate. Is involved in the dissimilation of the intracellular 2-phosphoglycolate formed during the DNA repair of 3'-phosphoglycolate ends, a major class of DNA lesions induced by oxidative stress. The sequence is that of Phosphoglycolate phosphatase from Psychrobacter arcticus (strain DSM 17307 / VKM B-2377 / 273-4).